A 533-amino-acid chain; its full sequence is Putative phosphate permease jhp_1384 (533 aa).

The next 12 helical transmembrane spans lie at 23–43 (IALALLFLIGAALLALIFGQA), 47–67 (GLLLIFAAVIGGYMAMNIGAN), 81–101 (AISMGGAILIAAVCEMLGAII), 129–149 (VMLASLLSGALWLHVATLIGA), 156–176 (SVVGGIMGAGMAAAGMSAINW), 182–202 (IVASWVISPLMGALIAMFFLM), 221–241 (VVPYLVALMSLAFSWYLIVKV), 248–268 (VGFEIQLACGCVLALLIFILF), 286–306 (VNELFNVPLIFAAALLSFAHG), 338–358 (VPLWIMVVGAAGIALGLSLYG), 372–392 (LDKMQAFCIALSAVITVLLAS), and 509–529 (LVTVPVSALLGALLFVALGFI).

It belongs to the inorganic phosphate transporter (PiT) (TC 2.A.20) family.

The protein localises to the cell membrane. Functionally, potential transporter for phosphate. This chain is Putative phosphate permease jhp_1384, found in Helicobacter pylori (strain J99 / ATCC 700824) (Campylobacter pylori J99).